The sequence spans 358 residues: ATPase ASNA1 homolog (358 aa).

Residue 35 to 42 coordinates ATP; that stretch reads KGGVGKTT. The active site involves D64. Positions 235 and 262 each coordinate ATP.

It belongs to the arsA ATPase family. As to quaternary structure, homodimer.

It localises to the cytoplasm. Its subcellular location is the endoplasmic reticulum. Its function is as follows. ATPase required for the post-translational delivery of tail-anchored (TA) proteins to the endoplasmic reticulum. Recognizes and selectively binds the transmembrane domain of TA proteins in the cytosol. This complex then targets to the endoplasmic reticulum by membrane-bound receptors, where the tail-anchored protein is released for insertion. This process is regulated by ATP binding and hydrolysis. ATP binding drives the homodimer towards the closed dimer state, facilitating recognition of newly synthesized TA membrane proteins. ATP hydrolysis is required for insertion. Subsequently, the homodimer reverts towards the open dimer state, lowering its affinity for the membrane-bound receptor, and returning it to the cytosol to initiate a new round of targeting. The chain is ATPase ASNA1 homolog from Babesia bovis.